A 181-amino-acid polypeptide reads, in one-letter code: ATP synthase subunit b (181 aa).

Residues 24–44 (LFPNLPNFIAHLLATIILVIV) form a helical membrane-spanning segment.

It belongs to the ATPase B chain family. As to quaternary structure, F-type ATPases have 2 components, F(1) - the catalytic core - and F(0) - the membrane proton channel. F(1) has five subunits: alpha(3), beta(3), gamma(1), delta(1), epsilon(1). F(0) has three main subunits: a(1), b(2) and c(10-14). The alpha and beta chains form an alternating ring which encloses part of the gamma chain. F(1) is attached to F(0) by a central stalk formed by the gamma and epsilon chains, while a peripheral stalk is formed by the delta and b chains.

The protein localises to the cell membrane. F(1)F(0) ATP synthase produces ATP from ADP in the presence of a proton or sodium gradient. F-type ATPases consist of two structural domains, F(1) containing the extramembraneous catalytic core and F(0) containing the membrane proton channel, linked together by a central stalk and a peripheral stalk. During catalysis, ATP synthesis in the catalytic domain of F(1) is coupled via a rotary mechanism of the central stalk subunits to proton translocation. In terms of biological role, component of the F(0) channel, it forms part of the peripheral stalk, linking F(1) to F(0). The polypeptide is ATP synthase subunit b (Mycoplasma mycoides subsp. mycoides SC (strain CCUG 32753 / NCTC 10114 / PG1)).